Consider the following 814-residue polypeptide: DNA topoisomerase 1 (814 aa).

The segment covering 1–12 (MSSSDSDSVSLS) has biased composition (low complexity). Positions 1–180 (MSSSDSDSVS…PNDEEDEDED (180 aa)) are disordered. The span at 13 to 22 (IRRRQRRGSS) shows a compositional bias: basic residues. 3 positions are modified to phosphoserine: serine 52, serine 54, and serine 136. Threonine 138 is modified (phosphothreonine). Interaction with DNA regions lie at residues 404–405 (KY), 467–472 (RAGNEK), and 559–561 (SAK). The Topo IB-type catalytic domain occupies 411–814 (GSSLKGQSDL…AADTPPDWKW (404 aa)). Catalysis depends on tyrosine 773, which acts as the O-(3'-phospho-DNA)-tyrosine intermediate.

Belongs to the type IB topoisomerase family. Monomer.

It catalyses the reaction ATP-independent breakage of single-stranded DNA, followed by passage and rejoining.. Its function is as follows. Releases the supercoiling and torsional tension of DNA introduced during the DNA replication and transcription by transiently cleaving and rejoining one strand of the DNA duplex. Introduces a single-strand break via transesterification at a target site in duplex DNA. The scissile phosphodiester is attacked by the catalytic tyrosine of the enzyme, resulting in the formation of a DNA-(3'-phosphotyrosyl)-enzyme intermediate and the expulsion of a 5'-OH DNA strand. TThe free DNA strand then rotates around the intact phosphodiester bond on the opposing strand, thus removing DNA supercoils. Finally, in the religation step, the DNA 5'-OH attacks the covalent intermediate to expel the active-site tyrosine and restore the DNA phosphodiester backbone. In Schizosaccharomyces pombe (strain 972 / ATCC 24843) (Fission yeast), this protein is DNA topoisomerase 1 (top1).